The following is a 507-amino-acid chain: MVTIRADEISNIIRERIEQYNREVKIVNTGTVLQVGDGIARIHGLDEVMAGELVEFEEGTIGIALNLESNNVGVVLMGDGLTIQEGSSVKATGRIAQIPVSEAYLGRVINALAKPIDGRGEISASESRLIESPAPGIISRRSVYEPLQTGLIAIDSMIPIGRGQRELIIGDRQTGKAAVATDTILNQKGQNVVCVYVAIGQKASSVAQVVTTFQERGAMEYTIVVAETADSPATLQYLAPYTGAALAEYFMYRERHTSIIYDDLSKQAQAYRQMSLLLRRPPGREAYPGDVFYLHSRLLERAAKLSSPLGEGSMTALPIVETQSGDVSAYIPTNVISITDGQIFLSADLFNAGIRPAINVGISVSRVGSAAQIKAMKQVAGKSKLELAQFAELEAFAQFASDLDKATQNQLARGQRLRELLKQSQAAPLTVEEQIVTIYTGANGYLDPLEIGQVKKFLVQLRTYLKTNKPQLQEIISSTKTFTEEVEALLKEAIPEQIELFLLQEQT.

170–177 (GDRQTGKA) provides a ligand contact to ATP.

The protein belongs to the ATPase alpha/beta chains family. As to quaternary structure, F-type ATPases have 2 components, CF(1) - the catalytic core - and CF(0) - the membrane proton channel. CF(1) has five subunits: alpha(3), beta(3), gamma(1), delta(1), epsilon(1). CF(0) has four main subunits: a, b, b' and c.

It is found in the plastid. Its subcellular location is the chloroplast thylakoid membrane. It carries out the reaction ATP + H2O + 4 H(+)(in) = ADP + phosphate + 5 H(+)(out). Functionally, produces ATP from ADP in the presence of a proton gradient across the membrane. The alpha chain is a regulatory subunit. The chain is ATP synthase subunit alpha, chloroplastic from Calycanthus floridus var. glaucus (Eastern sweetshrub).